The primary structure comprises 437 residues: Epsilon-sarcoglycan (437 aa).

Residues 1-317 (MQLPRWWELG…LKSRDYYTDF (317 aa)) are Extracellular-facing. Residue asparagine 200 is glycosylated (N-linked (GlcNAc...) asparagine). The chain crosses the membrane as a helical span at residues 318 to 338 (LITLAVPSAVALVLFLILAYI). Over 339–437 (MCCRREGVEK…QQQTTGKWYP (99 aa)) the chain is Cytoplasmic.

The protein belongs to the sarcoglycan alpha/epsilon family. Post-translationally, N-glycosylated. In terms of processing, ubiquitinated, leading to its degradation by the proteasome.

The protein localises to the cell membrane. The protein resides in the sarcolemma. It is found in the cytoplasm. It localises to the cytoskeleton. Its subcellular location is the cell projection. The protein localises to the dendrite. The protein resides in the golgi apparatus. In terms of biological role, component of the sarcoglycan complex, a subcomplex of the dystrophin-glycoprotein complex which forms a link between the F-actin cytoskeleton and the extracellular matrix. This Pongo abelii (Sumatran orangutan) protein is Epsilon-sarcoglycan.